The primary structure comprises 337 residues: F420-dependent glucose-6-phosphate dehydrogenase (337 aa).

Residue Asp44 participates in coenzyme F420-(gamma-Glu)n binding. His45 functions as the Proton donor in the catalytic mechanism. Residues Thr81 and 112-113 (TG) contribute to the coenzyme F420-(gamma-Glu)n site. Glu114 functions as the Proton acceptor in the catalytic mechanism. Residues Asn117, 180-181 (GG), and 183-184 (GV) contribute to the coenzyme F420-(gamma-Glu)n site. Substrate-binding residues include Thr198, Lys201, Lys262, and Arg286.

It belongs to the F420-dependent glucose-6-phosphate dehydrogenase family. Homodimer.

The catalysed reaction is oxidized coenzyme F420-(gamma-L-Glu)(n) + D-glucose 6-phosphate + H(+) = 6-phospho-D-glucono-1,5-lactone + reduced coenzyme F420-(gamma-L-Glu)(n). Functionally, catalyzes the coenzyme F420-dependent oxidation of glucose 6-phosphate (G6P) to 6-phosphogluconolactone. The protein is F420-dependent glucose-6-phosphate dehydrogenase of Kineococcus radiotolerans (strain ATCC BAA-149 / DSM 14245 / SRS30216).